Consider the following 385-residue polypeptide: Glucans biosynthesis protein C (385 aa).

Transmembrane regions (helical) follow at residues 17–37 (AWLMLLGIPFHISLIYSSHTW), 60–80 (MQVFFVISGYFSYMLFLRYPL), 91–111 (VGIPMLTAIPLLTLPQFIMLQ), 137–157 (ISHLWFLLVLVVMTTLCVWIF), 173–193 (KFSMVKLSVIFLCLGIGYAVI), 212–232 (FIVMQTLFYLPFFILGALAFI), 239–259 (LFTTPSRGCTLAAALAFVAYL), 274–294 (TESVITMVLGLWMVNVVFSFG), 311–331 (ASLFIYLVHHPLTLFFGAYIT), and 338–358 (WLGFLCGLIFVVGIAIILYEI).

The protein belongs to the acyltransferase 3 family. OpgC subfamily.

The protein resides in the cell membrane. It functions in the pathway glycan metabolism; osmoregulated periplasmic glucan (OPG) biosynthesis. Necessary for the succinyl substitution of periplasmic glucans. Could catalyze the transfer of succinyl residues from the cytoplasmic side of the membrane to the nascent glucan backbones on the periplasmic side of the membrane. The polypeptide is Glucans biosynthesis protein C (Shigella dysenteriae serotype 1 (strain Sd197)).